We begin with the raw amino-acid sequence, 156 residues long: Transcription antitermination protein NusB (156 aa).

Belongs to the NusB family.

In terms of biological role, involved in transcription antitermination. Required for transcription of ribosomal RNA (rRNA) genes. Binds specifically to the boxA antiterminator sequence of the ribosomal RNA (rrn) operons. This is Transcription antitermination protein NusB from Vibrio cholerae serotype O1 (strain ATCC 39541 / Classical Ogawa 395 / O395).